The chain runs to 558 residues: Ribonuclease Y (558 aa).

A helical membrane pass occupies residues 3–23; sequence VLSILLILVAVGVGIFVGRQF. A KH domain is found at 248 to 311; the sequence is TTTTVELPSN…EIAKEALQRL (64 aa). The 94-residue stretch at 374–467 folds into the HD domain; that stretch reads VLLHSKEVAY…VCAADALSAA (94 aa).

This sequence belongs to the RNase Y family.

It localises to the cell membrane. Its function is as follows. Endoribonuclease that initiates mRNA decay. The protein is Ribonuclease Y of Aquifex aeolicus (strain VF5).